Here is a 394-residue protein sequence, read N- to C-terminus: Phosphoglycerate kinase (394 aa).

Substrate contacts are provided by residues 21–23 (DLN), arginine 37, 60–63 (HLGR), arginine 115, and arginine 148. ATP contacts are provided by residues lysine 199, glutamate 321, and 347–350 (GGDT).

The protein belongs to the phosphoglycerate kinase family. Monomer.

It is found in the cytoplasm. It catalyses the reaction (2R)-3-phosphoglycerate + ATP = (2R)-3-phospho-glyceroyl phosphate + ADP. It functions in the pathway carbohydrate degradation; glycolysis; pyruvate from D-glyceraldehyde 3-phosphate: step 2/5. This Aromatoleum aromaticum (strain DSM 19018 / LMG 30748 / EbN1) (Azoarcus sp. (strain EbN1)) protein is Phosphoglycerate kinase.